The following is a 291-amino-acid chain: Feruloyl esterase B (291 aa).

An N-terminal signal peptide occupies residues 1–18 (MLVRSFLGFAVLAATCLA). N-linked (GlcNAc...) asparagine glycosylation occurs at Asn117. Catalysis depends on Ser136, which acts as the Charge relay system. An N-linked (GlcNAc...) asparagine glycan is attached at Asn179.

The protein belongs to the carbohydrate esterase 1 (CE1) family. Feruloyl esterase type B subfamily.

It localises to the secreted. The catalysed reaction is feruloyl-polysaccharide + H2O = ferulate + polysaccharide.. Its function is as follows. Feruloyl esterase which acts in synergy with xylanases in degradation of plant cell walls. Hydrolyzes the ester linkage of hydroxycinnamic acids (ferulic acid (FA) and p-coumaric acid) and diferulates present in plant cell walls. Is active on substrates containing ferulic acid ester linked to the C-5 and C-2 linkages of arabinofuranose, while it was found capable of de-esterifying acetylated glucuronoxylans. Efficiently releases ferulic acid (FA) from destarched wheat bran when incubated with an M3 xylanase. This Thermothelomyces thermophilus (strain ATCC 42464 / BCRC 31852 / DSM 1799) (Sporotrichum thermophile) protein is Feruloyl esterase B (Fae1a).